We begin with the raw amino-acid sequence, 137 residues long: Large ribosomal subunit protein uL16 (137 aa).

It belongs to the universal ribosomal protein uL16 family. As to quaternary structure, part of the 50S ribosomal subunit.

In terms of biological role, binds 23S rRNA and is also seen to make contacts with the A and possibly P site tRNAs. The sequence is that of Large ribosomal subunit protein uL16 from Pseudomonas aeruginosa (strain LESB58).